Here is a 378-residue protein sequence, read N- to C-terminus: AT-hook motif nuclear-localized protein 5 (378 aa).

Disordered stretches follow at residues glutamine 30 to arginine 70, valine 88 to glutamine 160, and asparagine 302 to glycine 378. The segment covering valine 104–lysine 113 has biased composition (basic residues). Residues lysine 105–lysine 113 carry the Bipartite nuclear localization signal motif. DNA-binding regions (a.T hook) lie at residues lysine 105–aspartate 117 and lysine 147–lysine 159. Residues threonine 171 to lysine 314 enclose the PPC domain. Composition is skewed to polar residues over residues glutamate 316–glycine 327 and serine 335–proline 345.

Interacts with AHL29.

It localises to the nucleus. Transcription factor that specifically binds AT-rich DNA sequences related to the nuclear matrix attachment regions (MARs). In Arabidopsis thaliana (Mouse-ear cress), this protein is AT-hook motif nuclear-localized protein 5.